A 974-amino-acid polypeptide reads, in one-letter code: Coiled-coil domain-containing protein 146 (974 aa).

Residues 1–44 (MEDRSKYIAEESEDEEDEEQEEKEKKGGASTSTETEEDQEDIPS) form a disordered region. Acidic residues predominate over residues 10–21 (EESEDEEDEEQE). S12 carries the phosphoserine modification. 6 coiled-coil regions span residues 105–160 (VQLL…QERE), 195–340 (KLLK…TKEN), 421–474 (LPEQ…REVL), 512–660 (KKLE…NESG), 687–712 (QDIE…QRQI), and 767–848 (LTEE…ELSM).

In terms of assembly, interacts with CCDC38 and CCDC42. Interacts with intraflagellar transport proteins IFT20 and IFT88.

Its subcellular location is the cytoplasm. The protein localises to the cytoskeleton. The protein resides in the microtubule organizing center. It localises to the centrosome. It is found in the centriole. Its subcellular location is the cell projection. The protein localises to the cilium. The protein resides in the flagellum. It localises to the flagellum axoneme. It is found in the cilium basal body. Its subcellular location is the midbody. Functionally, essential for sperm flagellum biogenesis and male fertility. The sequence is that of Coiled-coil domain-containing protein 146 (Ccdc146) from Rattus norvegicus (Rat).